The sequence spans 1368 residues: DNA-directed RNA polymerase subunit beta (1368 aa).

The protein belongs to the RNA polymerase beta chain family. The RNAP catalytic core consists of 2 alpha, 1 beta, 1 beta' and 1 omega subunit. When a sigma factor is associated with the core the holoenzyme is formed, which can initiate transcription.

It carries out the reaction RNA(n) + a ribonucleoside 5'-triphosphate = RNA(n+1) + diphosphate. Its function is as follows. DNA-dependent RNA polymerase catalyzes the transcription of DNA into RNA using the four ribonucleoside triphosphates as substrates. This is DNA-directed RNA polymerase subunit beta from Legionella pneumophila (strain Lens).